The sequence spans 211 residues: Thiamine-phosphate synthase (211 aa).

Residues 37–41 (QLRIK) and Asn-69 contribute to the 4-amino-2-methyl-5-(diphosphooxymethyl)pyrimidine site. Positions 70 and 89 each coordinate Mg(2+). Position 108 (Ser-108) interacts with 4-amino-2-methyl-5-(diphosphooxymethyl)pyrimidine. 134–136 (TQT) is a 2-[(2R,5Z)-2-carboxy-4-methylthiazol-5(2H)-ylidene]ethyl phosphate binding site. A 4-amino-2-methyl-5-(diphosphooxymethyl)pyrimidine-binding site is contributed by Lys-137. 2-[(2R,5Z)-2-carboxy-4-methylthiazol-5(2H)-ylidene]ethyl phosphate is bound by residues Gly-166 and 186–187 (VS).

The protein belongs to the thiamine-phosphate synthase family. The cofactor is Mg(2+).

It catalyses the reaction 2-[(2R,5Z)-2-carboxy-4-methylthiazol-5(2H)-ylidene]ethyl phosphate + 4-amino-2-methyl-5-(diphosphooxymethyl)pyrimidine + 2 H(+) = thiamine phosphate + CO2 + diphosphate. The catalysed reaction is 2-(2-carboxy-4-methylthiazol-5-yl)ethyl phosphate + 4-amino-2-methyl-5-(diphosphooxymethyl)pyrimidine + 2 H(+) = thiamine phosphate + CO2 + diphosphate. The enzyme catalyses 4-methyl-5-(2-phosphooxyethyl)-thiazole + 4-amino-2-methyl-5-(diphosphooxymethyl)pyrimidine + H(+) = thiamine phosphate + diphosphate. Its pathway is cofactor biosynthesis; thiamine diphosphate biosynthesis; thiamine phosphate from 4-amino-2-methyl-5-diphosphomethylpyrimidine and 4-methyl-5-(2-phosphoethyl)-thiazole: step 1/1. Its function is as follows. Condenses 4-methyl-5-(beta-hydroxyethyl)thiazole monophosphate (THZ-P) and 2-methyl-4-amino-5-hydroxymethyl pyrimidine pyrophosphate (HMP-PP) to form thiamine monophosphate (TMP). This chain is Thiamine-phosphate synthase, found in Salmonella paratyphi A (strain ATCC 9150 / SARB42).